A 212-amino-acid chain; its full sequence is MAIGLVGKKCGMTRVFTEAGASIPVTVVEISANRITQVKNTDVDGYQAIQVTTGTRRDSRVTAAQKGHFAKAGVAAGRGVWEFRANDSDLEGREIGGEILADLFEQGQMVDVTGNSKGKGFQGGVKRHNFSMQDATHGNSVSHRAIGSTGQNQSPGKVFKGKKMPGQMGNKRVTVQGLEVISVDVENGLLVIKGAIPGATGGDVIVRPSVKA.

The span at 140–155 (SVSHRAIGSTGQNQSP) shows a compositional bias: polar residues. Residues 140–166 (SVSHRAIGSTGQNQSPGKVFKGKKMPG) are disordered. Gln153 is subject to N5-methylglutamine.

It belongs to the universal ribosomal protein uL3 family. As to quaternary structure, part of the 50S ribosomal subunit. Forms a cluster with proteins L14 and L19. In terms of processing, methylated by PrmB.

Functionally, one of the primary rRNA binding proteins, it binds directly near the 3'-end of the 23S rRNA, where it nucleates assembly of the 50S subunit. The sequence is that of Large ribosomal subunit protein uL3 from Psychrobacter cryohalolentis (strain ATCC BAA-1226 / DSM 17306 / VKM B-2378 / K5).